Consider the following 385-residue polypeptide: Homoserine O-succinyltransferase (385 aa).

Residues 46 to 355 form the AB hydrolase-1 domain; that stretch reads NAILICHALS…NSQHGHDAFL (310 aa). Catalysis depends on serine 151, which acts as the Nucleophile. Position 221 (arginine 221) interacts with substrate. Residues aspartate 318 and histidine 351 contribute to the active site. Aspartate 352 provides a ligand contact to substrate.

It belongs to the AB hydrolase superfamily. MetX family. Homodimer.

It localises to the cytoplasm. It carries out the reaction L-homoserine + succinyl-CoA = O-succinyl-L-homoserine + CoA. The protein operates within amino-acid biosynthesis; L-methionine biosynthesis via de novo pathway; O-succinyl-L-homoserine from L-homoserine: step 1/1. In terms of biological role, transfers a succinyl group from succinyl-CoA to L-homoserine, forming succinyl-L-homoserine. The protein is Homoserine O-succinyltransferase of Hydrogenovibrio crunogenus (strain DSM 25203 / XCL-2) (Thiomicrospira crunogena).